A 769-amino-acid polypeptide reads, in one-letter code: Transferrin receptor protein 1 (769 aa).

Topologically, residues 1–70 are cytoplasmic; the sequence is MMDQARSAFS…KPKRFNGFIC (70 aa). Positions 1 to 70 are mediates interaction with SH3BP4; it reads MMDQARSAFS…KPKRFNGFIC (70 aa). Phosphoserine is present on residues S10 and S19. Position 20 is a phosphotyrosine (Y20). The short motif at 20–23 is the Endocytosis signal element; the sequence is YTRF. T21 is subject to Phosphothreonine. S24 bears the Phosphoserine mark. The Stop-transfer sequence signature appears at 61-64; the sequence is KPKR. A lipid anchor (S-palmitoyl cysteine) is attached at C70. Residues 71-91 form a helical; Signal-anchor for type II membrane protein membrane-spanning segment; that stretch reads YGTIAIILFFLIGFMIGYLGY. The Extracellular portion of the chain corresponds to 92–769; it reads CKRVEAKSEC…GDIWDIDNEF (678 aa). T107 carries an O-linked (GalNAc...) threonine glycan. Residues 232–322 form the PA domain; the sequence is SKAATVTGRL…GTGDPYTPGF (91 aa). N260 and N326 each carry an N-linked (GlcNAc...) asparagine glycan. The segment at 578–769 is ligand-binding; that stretch reads TMDVYEKLIQ…GDIWDIDNEF (192 aa). Positions 655-657 match the Cell attachment site motif; it reads RGD. N731 and N736 each carry an N-linked (GlcNAc...) asparagine glycan.

The protein belongs to the peptidase M28 family. M28B subfamily. As to quaternary structure, homodimer; disulfide-linked. Binds one transferrin molecule per subunit. Interacts with SH3BP4. Homodimer; disulfide-linked. Binds one transferrin or HFE molecule per subunit. Binds the HLA class II histocompatibility antigen, DR1. Interacts with SH3BP3. Interacts with STEAP3; facilitates TFRC endocytosis in erythroid precursor cells. In terms of processing, stearoylated by ZDHHC6 which inhibits TFRC-mediated activation of the JNK pathway and promotes mitochondrial fragmentation. Stearoylation does not affect iron uptake. N- and O-glycosylated, phosphorylated and palmitoylated.

It is found in the cell membrane. Its subcellular location is the melanosome. Functionally, cellular uptake of iron occurs via receptor-mediated endocytosis of ligand-occupied transferrin receptor into specialized endosomes. Endosomal acidification leads to iron release. The apotransferrin-receptor complex is then recycled to the cell surface with a return to neutral pH and the concomitant loss of affinity of apotransferrin for its receptor. Transferrin receptor is necessary for development of erythrocytes and the nervous system. Positively regulates T and B cell proliferation through iron uptake. Acts as a lipid sensor that regulates mitochondrial fusion by regulating activation of the JNK pathway. When dietary levels of stearate (C18:0) are low, promotes activation of the JNK pathway, resulting in HUWE1-mediated ubiquitination and subsequent degradation of the mitofusin MFN2 and inhibition of mitochondrial fusion. When dietary levels of stearate (C18:0) are high, TFRC stearoylation inhibits activation of the JNK pathway and thus degradation of the mitofusin MFN2. Mediates uptake of NICOL1 into fibroblasts where it may regulate extracellular matrix production. This is Transferrin receptor protein 1 (TFRC) from Felis catus (Cat).